The following is a 297-amino-acid chain: MVVIANAHNELIHDAVLDYYGKRLATCSSDKTIKIFEVEGETHKLIDTLTGHEGPVWRVDWAHPKFGTILASCSYDGKVLIWKEENGRWSQIAVHAVHSASVNSVQWAPHEYGPLLLVASSDGKVSVVEFKENGTTSPIIIDAHAIGVNSASWAPATIEEDGEHNGTKESRKFVTGGADNLVKIWKYNSDAQTYVLESTLEGHSDWVRDVAWSPTVLLRSYLASVSQDRTCIIWTQDNEQGPWKKTLLKEEKFPDVLWRASWSLSGNVLALSGGDNKVTLWKENLEGKWEPAGEVHQ.

6 WD repeats span residues Ala-7–Ile-46, Gly-51–Ile-92, Val-97–Pro-138, Ala-143–Val-195, Gly-202–Lys-244, and Lys-252–Pro-291.

The protein belongs to the WD repeat SEC13 family. The basic repeat unit of a COPII coated vesicle is composed of 5 proteins: the small GTPase SAR1, the heterodimeric SEC23-SEC24 complex, and the heterotetrameric SEC13-SEC31 complex. This repeat unit polymerizes to induce membrane deformation into a transport vesicle. Component of the nuclear pore complex (NPC). NPC constitutes the exclusive means of nucleocytoplasmic transport. NPCs allow the passive diffusion of ions and small molecules and the active, nuclear transport receptor-mediated bidirectional transport of macromolecules such as proteins, RNAs, ribonucleoparticles (RNPs), and ribosomal subunits across the nuclear envelope. Due to its 8-fold rotational symmetry, all subunits are present with 8 copies or multiples thereof. SEC13 is part of the heptameric 0.5 MDa autoassembling NUP84 NPC subcomplex (NUP84, NUP85, NUP120, NUP133, NUP145C, SEC13 and SEH1). Component of the SEA complex composed of at least IML1/SEA1, RTC1/SEA2, MTC5/SEA3, NPR2, NPR3, SEA4, SEC13 and SEH1.

The protein localises to the cytoplasmic vesicle. Its subcellular location is the COPII-coated vesicle membrane. It is found in the endoplasmic reticulum membrane. The protein resides in the nucleus. It localises to the nuclear pore complex. The protein localises to the vacuole membrane. Its function is as follows. Functions as a component of the nuclear pore complex (NPC) and the COPII coat. It is one of 5 proteins constituting the COPII coat, which is involved in anterograde (ER to Golgi) double-membrane transport vesicle formation. First the small GTPase SAR1, activated by and binding to the integral ER membrane protein SEC12, exchanges GDP for GTP and recruits the heterodimer SEC23/24, which in turn recruits the heterotetramer SEC13-SEC31. The polymerization of COPII coat complexes then causes physically the deformation (budding) of the membrane, leading to the creation of a transport vesicle. The COPII complex is dissociated upon SAR1-GTP hydrolysis to SAR1-GDP. SEC23 functions as the SAR1 GTPase activating protein, whose activity is stimulated in the presence of SEC13/31. SEC13 is directly or indirectly required for normal ER membrane and nuclear envelope morphology. It also functions as a component of the nuclear pore complex (NPC). NPC components, collectively referred to as nucleoporins (NUPs), can play the role of both NPC structural components and of docking or interaction partners for transiently associated nuclear transport factors. SEC13 is required for efficient mRNA export from the nucleus to the cytoplasm and for correct nuclear pore biogenesis and distribution. Component of the SEA complex which coats the vacuolar membrane and is involved in intracellular trafficking, autophagy, response to nitrogen starvation, and amino acid biogenesis. In Saccharomyces cerevisiae (strain ATCC 204508 / S288c) (Baker's yeast), this protein is Protein transport protein SEC13 (SEC13).